The following is a 596-amino-acid chain: mRNA export factor mex67 (596 aa).

Residues Ser-128, Ser-130, and Ser-133 each carry the phosphoserine modification. LRR repeat units follow at residues 215 to 236 (DVISVSLSDNNLQSVTAVTTLA), 241 to 262 (KLLNLSLANNRITSLSDLDPWS), and 263 to 282 (PKTKLPELQELVLVGNPIVT). An LRRCT domain is found at 283-338 (TFANRAMDYQREMVSRFPKLRLLDGNSINSEIIASQSTVPFPVYQSFFDKVETEQI). In terms of domain architecture, NTF2 spans 338 to 499 (IVNSFLAAFF…ILIINDLLVI (162 aa)). Residues 543 to 596 (DTRQQIVLKIKAETGLNDYYAHMCCEQNNWDYNSALASFLELKSRNVIPAEAFS) form the TAP-C domain.

The protein belongs to the NXF family. In terms of assembly, interacts with mlo3 and rae1.

Its subcellular location is the nucleus. It is found in the cytoplasm. In terms of biological role, involved in the export of mRNA from the nucleus to the cytoplasm. This chain is mRNA export factor mex67 (mex67), found in Schizosaccharomyces pombe (strain 972 / ATCC 24843) (Fission yeast).